A 20-amino-acid chain; its full sequence is Blooming-related protein 2 (20 aa).

The interval 1–20 (VSAEYLERQGPKDDXDCFDD) is disordered.

Possible 'checkpoint' protein for cell division in the blooming process. The polypeptide is Blooming-related protein 2 (Prorocentrum triestinum (Red tide alga)).